We begin with the raw amino-acid sequence, 383 residues long: Carbamoyl phosphate synthase small chain (383 aa).

A CPSase region spans residues Met-1 to Asp-190. Residues Ser-51, Gly-242, and Gly-244 each coordinate L-glutamine. Positions Arg-194–Val-381 constitute a Glutamine amidotransferase type-1 domain. Cys-271 (nucleophile) is an active-site residue. Positions 272, 275, 311, 313, and 314 each coordinate L-glutamine. Active-site residues include His-354 and Glu-356.

Belongs to the CarA family. As to quaternary structure, composed of two chains; the small (or glutamine) chain promotes the hydrolysis of glutamine to ammonia, which is used by the large (or ammonia) chain to synthesize carbamoyl phosphate. Tetramer of heterodimers (alpha,beta)4.

It catalyses the reaction hydrogencarbonate + L-glutamine + 2 ATP + H2O = carbamoyl phosphate + L-glutamate + 2 ADP + phosphate + 2 H(+). It carries out the reaction L-glutamine + H2O = L-glutamate + NH4(+). It functions in the pathway amino-acid biosynthesis; L-arginine biosynthesis; carbamoyl phosphate from bicarbonate: step 1/1. The protein operates within pyrimidine metabolism; UMP biosynthesis via de novo pathway; (S)-dihydroorotate from bicarbonate: step 1/3. Small subunit of the glutamine-dependent carbamoyl phosphate synthetase (CPSase). CPSase catalyzes the formation of carbamoyl phosphate from the ammonia moiety of glutamine, carbonate, and phosphate donated by ATP, constituting the first step of 2 biosynthetic pathways, one leading to arginine and/or urea and the other to pyrimidine nucleotides. The small subunit (glutamine amidotransferase) binds and cleaves glutamine to supply the large subunit with the substrate ammonia. The protein is Carbamoyl phosphate synthase small chain of Parasynechococcus marenigrum (strain WH8102).